The primary structure comprises 288 residues: Diaminopimelate epimerase (288 aa).

The substrate site is built by Asn13, Gln46, and Asn66. The active-site Proton donor is the Cys75. Substrate is bound by residues 76–77 (GN), Asn166, Asn199, and 217–218 (ER). Cys226 functions as the Proton acceptor in the catalytic mechanism. Residue 227 to 228 (GT) participates in substrate binding.

The protein belongs to the diaminopimelate epimerase family. In terms of assembly, homodimer.

The protein localises to the cytoplasm. It catalyses the reaction (2S,6S)-2,6-diaminopimelate = meso-2,6-diaminopimelate. The protein operates within amino-acid biosynthesis; L-lysine biosynthesis via DAP pathway; DL-2,6-diaminopimelate from LL-2,6-diaminopimelate: step 1/1. In terms of biological role, catalyzes the stereoinversion of LL-2,6-diaminopimelate (L,L-DAP) to meso-diaminopimelate (meso-DAP), a precursor of L-lysine and an essential component of the bacterial peptidoglycan. This Cupriavidus metallidurans (strain ATCC 43123 / DSM 2839 / NBRC 102507 / CH34) (Ralstonia metallidurans) protein is Diaminopimelate epimerase.